Reading from the N-terminus, the 1192-residue chain is Protein pangolin, isoform J (1192 aa).

The Nuclear localization signal signature appears at 351-357 (LGLPSEE). Positions 691-713 (AKHTSNAQSNESKETTNDKKKPH) are disordered. The segment at residues 714 to 782 (IKKPLNAFML…LHMELYPGWS (69 aa)) is a DNA-binding region (HMG box). Disordered regions lie at residues 790 to 812 (VSKKKKRKKDRSTTDSGGNNMKK), 847 to 916 (PAED…SPST), 955 to 986 (QRPTLVSTSGSSSGSTSSISTTPNTSSTVSPV), and 1136 to 1192 (QLNN…ISVS). A compositionally biased stretch (acidic residues) spans 862 to 871 (SDDDEDDYDD). 2 stretches are compositionally biased toward low complexity: residues 898-915 (SMPSPGCLSGLSSLQSPS) and 957-986 (PTLVSTSGSSSGSTSSISTTPNTSSTVSPV). 2 stretches are compositionally biased toward polar residues: residues 1140–1162 (RTENPNRSEQTMLSVSNHSVNSS) and 1170–1192 (SQAIVSSNPPNAGSSDNGVISVS).

The protein belongs to the TCF/LEF family. Binds to the beta-catenin homolog arm or to gro.

The protein localises to the nucleus. Segment polarity protein. Functions together with arm to transduce the Wingless (Wg) signal in embryos and in developing adult tissues. Acts as a transcriptional activator, but in the absence of arm, it binds to gro and acts as a transcriptional repressor of wg-responsive genes. This chain is Protein pangolin, isoform J, found in Drosophila melanogaster (Fruit fly).